Consider the following 172-residue polypeptide: Thioredoxin Y1, chloroplastic (172 aa).

The N-terminal 62 residues, 1–62 (MASISLSSST…SSTTRCTPRR (62 aa)), are a transit peptide targeting the chloroplast. Residues 63-169 (IEAKKQTFDS…LIQRIEDSLK (107 aa)) enclose the Thioredoxin domain. Catalysis depends on nucleophile residues cysteine 93 and cysteine 96. A disulfide bridge links cysteine 93 with cysteine 96.

It belongs to the thioredoxin family. Plant Y-type subfamily. In terms of tissue distribution, expressed in roots and seeds.

The protein resides in the plastid. The protein localises to the chloroplast stroma. Thiol-disulfide oxidoreductase that poorly activates chloroplastic malate dehydrogenase (NADP-MDH) and fructose-1,6-bisphosphatase. Provides reducing equivalents for peroxiredoxin Q. The sequence is that of Thioredoxin Y1, chloroplastic from Arabidopsis thaliana (Mouse-ear cress).